The sequence spans 568 residues: bZIP transcription factor 60 (568 aa).

2 stretches are compositionally biased toward low complexity: residues 1 to 13 and 60 to 78; these read MAEP…FADL and TTSS…TSSA. Disordered regions lie at residues 1-29 and 45-134; these read MAEP…TLGD and DFDV…RKKQ. Residues 1–240 lie on the Cytoplasmic side of the membrane; that stretch reads MAEPDLLAPF…PAKKARKTKK (240 aa). Residues 103-113 show a composition bias toward basic and acidic residues; that stretch reads GGKDGKDDEAK. Residues 111 to 171 form the bZIP domain; that stretch reads EAKRRARLVR…AENAALKQQL (61 aa). The tract at residues 113 to 144 is basic motif; it reads KRRARLVRNRESAHQSRQRKKQYVEELEGKVK. The interval 150 to 157 is leucine-zipper; sequence IADLTARI. The chain crosses the membrane as a helical span at residues 241 to 261; that stretch reads VAGVSLLGLLFLMMVCGCLVP. Over 262-568 the chain is Lumenal; that stretch reads AVNRMYGAAY…LPFKSHSPHL (307 aa). N-linked (GlcNAc...) asparagine glycosylation is found at Asn307, Asn452, Asn456, Asn488, and Asn499. The disordered stretch occupies residues 479 to 510; the sequence is AIPLRGSTSNDTDHFKAPPKNHSQSHAGRKPV.

It belongs to the bZIP family.

The protein resides in the endoplasmic reticulum membrane. It localises to the nucleus. In terms of biological role, transcription factor involved in endoplasmic reticulum (ER) stress response. Acts as a ER stress sensor and activates the transcription factor BZIP50 and the chaperone BIP1. This is bZIP transcription factor 60 from Oryza sativa subsp. japonica (Rice).